The sequence spans 380 residues: Crotonobetainyl-CoA reductase (380 aa).

This sequence belongs to the acyl-CoA dehydrogenase family. Homotetramer. Requires FAD as cofactor.

Its subcellular location is the cytoplasm. The enzyme catalyses 4-(trimethylamino)butanoyl-CoA + oxidized [electron-transfer flavoprotein] + H(+) = crotonobetainyl-CoA + reduced [electron-transfer flavoprotein]. The protein operates within amine and polyamine metabolism; carnitine metabolism. Its function is as follows. Catalyzes the reduction of crotonobetainyl-CoA to gamma-butyrobetainyl-CoA. The sequence is that of Crotonobetainyl-CoA reductase from Escherichia coli O6:K15:H31 (strain 536 / UPEC).